Reading from the N-terminus, the 630-residue chain is Forkhead box protein O (630 aa).

The tract at residues 1–45 (MDGFVQEWSNLPRSDNGLHMDQLVGELPTDGGFEPQTRARSNTWP) is disordered. Position 43 is a phosphothreonine; by PKB/AKT1 (threonine 43). The fork-head DNA-binding region spans 92-198 (WGNLSYADLI…ETSRYEKRRG (107 aa)). Position 187 is a phosphoserine; by PKB/AKT1 (serine 187). The disordered stretch occupies residues 214–260 (GLNDATPSPSSSVSEGLDHFPESPLHSGGFQLSPDFRQRASSNASSC). Over residues 218-227 (ATPSPSSSVS) the composition is skewed to polar residues. Residue serine 255 is modified to Phosphoserine; by PKB/AKT1. Phosphoserine occurs at positions 258, 259, and 264. 2 disordered regions span residues 318–379 (SAAS…QQQQ) and 403–432 (TRDG…SLNT). Low complexity-rich tracts occupy residues 332–350 (QQQQ…QLPQ) and 367–379 (QPQA…QQQQ). Polar residues-rich tracts occupy residues 408–417 (SPNSVTTTMS) and 423–432 (SEPSSDSLNT).

In terms of assembly, interacts with melt.

It localises to the cytoplasm. Its subcellular location is the nucleus. Transcription factor involved in the regulation of the insulin signaling pathway. Consistently activates both the downstream target Thor\d4EBP and the feedback control target InR. Involved in negative regulation of the cell cycle, modulating cell growth and proliferation. In response to cellular stresses, such as nutrient deprivation or increased levels of reactive oxygen species, foxo is activated and inhibits growth through the action of target genes such as Thor. Foxo activated in the adult fat body can regulate lifespan in adults; an insulin peptide itself may function as one secondary messenger of insulin-regulated aging. Also regulates Lip4, homolog of human acid lipases, thereby acting as a key modulator of lipid metabolism by insulin signaling and integrates insulin responses to glucose and lipid homeostasis. This Drosophila grimshawi (Hawaiian fruit fly) protein is Forkhead box protein O.